Here is a 548-residue protein sequence, read N- to C-terminus: Membrane protein insertase YidC (548 aa).

The chain crosses the membrane as a helical span at residues 6 to 26; sequence NLLIIALLFVSFMIWQAWEQD. The disordered stretch occupies residues 28–52; it reads NPQPQQQTTQTTTTAAGSAADQGVP. Low complexity predominate over residues 29-41; the sequence is PQPQQQTTQTTTT. A run of 4 helical transmembrane segments spans residues 345-365, 420-440, 458-478, and 499-519; these read KFIH…TFIV, LGGC…YYML, LSAQ…MFFI, and PVIF…YYIV.

It belongs to the OXA1/ALB3/YidC family. Type 1 subfamily. In terms of assembly, interacts with the Sec translocase complex via SecD. Specifically interacts with transmembrane segments of nascent integral membrane proteins during membrane integration.

It localises to the cell inner membrane. Its function is as follows. Required for the insertion and/or proper folding and/or complex formation of integral membrane proteins into the membrane. Involved in integration of membrane proteins that insert both dependently and independently of the Sec translocase complex, as well as at least some lipoproteins. Aids folding of multispanning membrane proteins. The polypeptide is Membrane protein insertase YidC (Klebsiella pneumoniae subsp. pneumoniae (strain ATCC 700721 / MGH 78578)).